Here is a 126-residue protein sequence, read N- to C-terminus: Probable flagellum biosynthesis repressor protein FlbT (126 aa).

The protein belongs to the FlbT family.

Functionally, has a post-transcriptional repressor function in flagellum biogenesis. Associates with the 5'-UTR of fljK mRNA and promotes its degradation. The protein is Probable flagellum biosynthesis repressor protein FlbT of Rhodopseudomonas palustris (strain ATCC BAA-98 / CGA009).